Here is a 187-residue protein sequence, read N- to C-terminus: UPF0301 protein lpl0620 (187 aa).

The protein belongs to the UPF0301 (AlgH) family.

The sequence is that of UPF0301 protein lpl0620 from Legionella pneumophila (strain Lens).